The primary structure comprises 562 residues: Phosphopantothenoylcysteine decarboxylase subunit SIS2 (562 aa).

A compositionally biased stretch (polar residues) spans 1-10; the sequence is MTAVASTSGK. Disordered stretches follow at residues 1–63, 97–165, and 490–562; these read MTAV…SNAT, FSDL…KDYD, and GYPK…DKHQ. Basic and acidic residues predominate over residues 27–42; it reads GQKEILLDHEDAKGKD. Polar residues-rich tracts occupy residues 44–63 and 99–113; these read IINSPVSGRQSISPTLSNAT and DLKQQQKQDSLTQLK. Ser47, Ser50, Ser54, and Ser56 each carry phosphoserine. Over residues 121–134 the composition is skewed to low complexity; it reads SPNSNPAPVSNSIP. Polar residues predominate over residues 142 to 156; that stretch reads NHTNTSRTTQLSGSP. At Ser155 the chain carries Phosphoserine. Positions 496 to 553 are enriched in acidic residues; it reads EEEDDDEDEEEDDDEEEDTEDKNENNNDDDDDDDDDDDDDDDDDDDDDDDDEDEDEAE.

It belongs to the HFCD (homooligomeric flavin containing Cys decarboxylase) superfamily. As to quaternary structure, interacts with the C-terminal domain of PPZ1. Component of the phosphopantothenoylcysteine decarboxylase (PPCDC) complex, a heterotrimer composed of CAB3, SIS2 and VHS3.

The protein resides in the nucleus. The protein localises to the cytoplasm. Functionally, component of the phosphopantothenoylcysteine decarboxylase (PPCDC) involved in the coenzyme A synthesis. Acts as an inhibitory subunit of protein phosphatase PPZ1, which is involved in many cellular processes such as G1-S transition or salt tolerance. Also modulates the expression of the ENA1 ATPase. This is Phosphopantothenoylcysteine decarboxylase subunit SIS2 (SIS2) from Saccharomyces cerevisiae (strain ATCC 204508 / S288c) (Baker's yeast).